Here is a 796-residue protein sequence, read N- to C-terminus: Protein translocase subunit SecA 2 (796 aa).

ATP contacts are provided by residues Gln84, 102–106 (GEGKT), and Asp496.

This sequence belongs to the SecA family. Monomer and homodimer (Potential). Part of the accessory SecA2/SecY2 protein translocation apparatus required to export cell wall protein SraP.

The protein localises to the cell membrane. Its subcellular location is the cytoplasm. It catalyses the reaction ATP + H2O + cellular proteinSide 1 = ADP + phosphate + cellular proteinSide 2.. Its function is as follows. Part of the accessory SecA2/SecY2 system specifically required to export SraP, a serine-rich repeat cell wall protein encoded upstream in the same operon. The chain is Protein translocase subunit SecA 2 from Staphylococcus aureus (strain NCTC 8325 / PS 47).